The chain runs to 65 residues: Neurotoxin BmK-M3 (65 aa).

The 63-residue stretch at 2–64 folds into the LCN-type CS-alpha/beta domain; that stretch reads RDAYIAKPEN…VPIRVWGKCH (63 aa). Disulfide bonds link Cys-12–Cys-63, Cys-16–Cys-36, Cys-22–Cys-46, and Cys-26–Cys-48.

It belongs to the long (4 C-C) scorpion toxin superfamily. Sodium channel inhibitor family. Alpha subfamily. Expressed by the venom gland.

It is found in the secreted. In terms of biological role, binds to sodium channels (Nav) and inhibits the inactivation of the activated channels, thereby blocking neuronal transmission. This is Neurotoxin BmK-M3 from Olivierus martensii (Manchurian scorpion).